The sequence spans 260 residues: Myb transcription factor 42 (260 aa).

HTH myb-type domains lie at 9-61 and 62-116; these read KAHT…INYL and RPDL…RRKL. 2 DNA-binding regions (H-T-H motif) span residues 37-61 and 89-112; these read WRSL…INYL and WSLI…NTHI.

As to expression, mainly expressed in the aerial parts and, to a lower extent, in roots.

It localises to the nucleus. Functionally, transcription factor that negatively regulates the expression of caffeic acid O-methyl-transferase genes (COMTs) and of other genes involved in the biosynthesis of lignin, thus preventing lignification. This chain is Myb transcription factor 42, found in Zea mays (Maize).